A 227-amino-acid polypeptide reads, in one-letter code: Cytochrome c oxidase subunit 2 (227 aa).

Topologically, residues 1 to 14 (MAYPLQLGFQDATS) are mitochondrial intermembrane. Residues 15-45 (PIMEELLHFHDHTLMIVFLISSLVLYIISLM) form a helical membrane-spanning segment. The Mitochondrial matrix segment spans residues 46 to 59 (LTTKLTHTSTMDAQ). Residues 60–87 (EVETIWTILPAIILILIALPSLRILYMM) traverse the membrane as a helical segment. Over 88–227 (DEINNPSLTI…HFEKWSTSML (140 aa)) the chain is Mitochondrial intermembrane. Cu cation contacts are provided by His-161, Cys-196, Glu-198, Cys-200, His-204, and Met-207. A Mg(2+)-binding site is contributed by Glu-198.

Belongs to the cytochrome c oxidase subunit 2 family. Component of the cytochrome c oxidase (complex IV, CIV), a multisubunit enzyme composed of 14 subunits. The complex is composed of a catalytic core of 3 subunits MT-CO1, MT-CO2 and MT-CO3, encoded in the mitochondrial DNA, and 11 supernumerary subunits COX4I, COX5A, COX5B, COX6A, COX6B, COX6C, COX7A, COX7B, COX7C, COX8 and NDUFA4, which are encoded in the nuclear genome. The complex exists as a monomer or a dimer and forms supercomplexes (SCs) in the inner mitochondrial membrane with NADH-ubiquinone oxidoreductase (complex I, CI) and ubiquinol-cytochrome c oxidoreductase (cytochrome b-c1 complex, complex III, CIII), resulting in different assemblies (supercomplex SCI(1)III(2)IV(1) and megacomplex MCI(2)III(2)IV(2)). Found in a complex with TMEM177, COA6, COX18, COX20, SCO1 and SCO2. Interacts with TMEM177 in a COX20-dependent manner. Interacts with COX20. Interacts with COX16. Requires Cu cation as cofactor.

Its subcellular location is the mitochondrion inner membrane. It carries out the reaction 4 Fe(II)-[cytochrome c] + O2 + 8 H(+)(in) = 4 Fe(III)-[cytochrome c] + 2 H2O + 4 H(+)(out). Its function is as follows. Component of the cytochrome c oxidase, the last enzyme in the mitochondrial electron transport chain which drives oxidative phosphorylation. The respiratory chain contains 3 multisubunit complexes succinate dehydrogenase (complex II, CII), ubiquinol-cytochrome c oxidoreductase (cytochrome b-c1 complex, complex III, CIII) and cytochrome c oxidase (complex IV, CIV), that cooperate to transfer electrons derived from NADH and succinate to molecular oxygen, creating an electrochemical gradient over the inner membrane that drives transmembrane transport and the ATP synthase. Cytochrome c oxidase is the component of the respiratory chain that catalyzes the reduction of oxygen to water. Electrons originating from reduced cytochrome c in the intermembrane space (IMS) are transferred via the dinuclear copper A center (CU(A)) of subunit 2 and heme A of subunit 1 to the active site in subunit 1, a binuclear center (BNC) formed by heme A3 and copper B (CU(B)). The BNC reduces molecular oxygen to 2 water molecules using 4 electrons from cytochrome c in the IMS and 4 protons from the mitochondrial matrix. The protein is Cytochrome c oxidase subunit 2 (MT-CO2) of Rhinoceros unicornis (Greater Indian rhinoceros).